The primary structure comprises 415 residues: Amylovoran biosynthesis protein AmsJ (415 aa).

Belongs to the polysaccharide pyruvyl transferase family.

Its pathway is glycan metabolism; exopolysaccharide biosynthesis. In terms of biological role, involved in the biosynthesis of amylovoran which functions as a virulence factor. The protein is Amylovoran biosynthesis protein AmsJ (amsJ) of Erwinia amylovora (Fire blight bacteria).